Reading from the N-terminus, the 311-residue chain is tRNA-cytidine(32) 2-sulfurtransferase (311 aa).

Positions 47-52 (SGGKDS) match the PP-loop motif motif. C122, C125, and C213 together coordinate [4Fe-4S] cluster.

The protein belongs to the TtcA family. Homodimer. Mg(2+) serves as cofactor. [4Fe-4S] cluster is required as a cofactor.

Its subcellular location is the cytoplasm. It carries out the reaction cytidine(32) in tRNA + S-sulfanyl-L-cysteinyl-[cysteine desulfurase] + AH2 + ATP = 2-thiocytidine(32) in tRNA + L-cysteinyl-[cysteine desulfurase] + A + AMP + diphosphate + H(+). The protein operates within tRNA modification. Its function is as follows. Catalyzes the ATP-dependent 2-thiolation of cytidine in position 32 of tRNA, to form 2-thiocytidine (s(2)C32). The sulfur atoms are provided by the cysteine/cysteine desulfurase (IscS) system. This is tRNA-cytidine(32) 2-sulfurtransferase from Escherichia coli O45:K1 (strain S88 / ExPEC).